Reading from the N-terminus, the 212-residue chain is Ropporin-1 (212 aa).

The region spanning 12-43 (PELPELLKQFTKAAIRTQPPDLIQWAAEYFGA) is the RIIa domain. A Phosphoserine modification is found at S56. Positions 209-212 (VRLE) are interaction with RHPN1.

Belongs to the ropporin family. Homodimer. Interacts with AKAP3. May interact with SPA17. Interacts with RHPN1. Interacts with FSCB; the interaction increases upon spermatozoa capacitation conditions. Interacts with CFAP61. Post-translationally, sumoylated, sumoylation decreases upon spermatozoa capacitation conditions.

It is found in the cell projection. The protein resides in the cilium. The protein localises to the flagellum. Functionally, important for male fertility. With ROPN1L, involved in fibrous sheath integrity and sperm motility, plays a role in PKA-dependent signaling processes required for spermatozoa capacitation. In Rattus norvegicus (Rat), this protein is Ropporin-1 (Ropn1).